The chain runs to 432 residues: 3-phosphoshikimate 1-carboxyvinyltransferase (432 aa).

3-phosphoshikimate-binding residues include Lys23, Ser24, and Arg28. Position 23 (Lys23) interacts with phosphoenolpyruvate. Phosphoenolpyruvate contacts are provided by Gly95 and Arg123. 3-phosphoshikimate-binding residues include Ser167, Gln169, Asp317, and Lys344. Gln169 serves as a coordination point for phosphoenolpyruvate. Residue Asp317 is the Proton acceptor of the active site. The phosphoenolpyruvate site is built by Arg348 and Arg390.

The protein belongs to the EPSP synthase family. As to quaternary structure, monomer.

It localises to the cytoplasm. It catalyses the reaction 3-phosphoshikimate + phosphoenolpyruvate = 5-O-(1-carboxyvinyl)-3-phosphoshikimate + phosphate. It participates in metabolic intermediate biosynthesis; chorismate biosynthesis; chorismate from D-erythrose 4-phosphate and phosphoenolpyruvate: step 6/7. Functionally, catalyzes the transfer of the enolpyruvyl moiety of phosphoenolpyruvate (PEP) to the 5-hydroxyl of shikimate-3-phosphate (S3P) to produce enolpyruvyl shikimate-3-phosphate and inorganic phosphate. The polypeptide is 3-phosphoshikimate 1-carboxyvinyltransferase (Staphylococcus aureus (strain N315)).